We begin with the raw amino-acid sequence, 461 residues long: MAQQSIIDTVVNLCKRRGLVYPCGEIYGGTRSAWDYGPLGVELKENIKRQWWRTMVTSRPDVVGVDTSVILPRQVWVTSGHVEVFTDPLVESLHTHKRYRADHLLEAYEEKHGHPPANGLADINDPETGQPGKWTEPKAFSGLLKTFLGPVDDEEGLHYLRPETAQGIFVNFKNVMNSSRMKPPFGIANIGKSFRNEITPGNFIFRTREFEQMEMEFFVKPGEDEEWHQHWIDARHQWYIDLGVNPDNLRLYEHPQEKLSHYSKRTVDIEYAFNFANSKWGELEGIANRTDYDLRVHSEGSGEDLSYFDQETGERWIPYVIEPAAGLGRAMMVFLMDAYHEDEAPNSKGGVDKRVVLKLDRRLAPVKVAVLPLSKKPELSGPAEKLAAELRQFWNVEYDTSGAIGRRYRRQDEIGTPFCVTVDFDTLEDNAVTVRERDTMEQIRVPLDELQGYLAQQLIGC.

Residues arginine 100 and glutamate 163 each coordinate substrate. Residues 195 to 197 (RNE), 205 to 210 (FRTREF), 282 to 283 (EL), and 326 to 329 (GLGR) each bind ATP. 210–214 (FEQME) serves as a coordination point for substrate. Residue 322 to 326 (EPAAG) coordinates substrate.

It belongs to the class-II aminoacyl-tRNA synthetase family. In terms of assembly, homodimer.

It is found in the cytoplasm. The catalysed reaction is tRNA(Gly) + glycine + ATP = glycyl-tRNA(Gly) + AMP + diphosphate. Functionally, catalyzes the attachment of glycine to tRNA(Gly). The sequence is that of Glycine--tRNA ligase from Corynebacterium efficiens (strain DSM 44549 / YS-314 / AJ 12310 / JCM 11189 / NBRC 100395).